We begin with the raw amino-acid sequence, 290 residues long: 33 kDa chaperonin (290 aa).

2 cysteine pairs are disulfide-bonded: cysteine 231–cysteine 233 and cysteine 264–cysteine 267.

It belongs to the HSP33 family. In terms of processing, under oxidizing conditions two disulfide bonds are formed involving the reactive cysteines. Under reducing conditions zinc is bound to the reactive cysteines and the protein is inactive.

It is found in the cytoplasm. Its function is as follows. Redox regulated molecular chaperone. Protects both thermally unfolding and oxidatively damaged proteins from irreversible aggregation. Plays an important role in the bacterial defense system toward oxidative stress. The chain is 33 kDa chaperonin from Photorhabdus laumondii subsp. laumondii (strain DSM 15139 / CIP 105565 / TT01) (Photorhabdus luminescens subsp. laumondii).